A 489-amino-acid chain; its full sequence is Ribonuclease G (489 aa).

Residues G39–R128 form the S1 motif domain. Mg(2+) contacts are provided by D304 and D347.

Belongs to the RNase E/G family. RNase G subfamily. As to quaternary structure, homodimer, in equilibrium with possible higher multimers. Mg(2+) is required as a cofactor.

Its subcellular location is the cytoplasm. Functionally, an endonuclease that acts in the processing of the 5'-end of 16S rRNA and 23S rRNA. It prefers 5'-monophosphorylated substrates and cleaves single-stranded sites rich in A and U residues; contributes to tRNA processing and mRNA turnover. This Escherichia coli O157:H7 protein is Ribonuclease G (rng).